We begin with the raw amino-acid sequence, 379 residues long: Leukocyte elastase inhibitor (379 aa).

At Met1 the chain carries N-acetylmethionine. Lys137 and Lys177 each carry N6-acetyllysine. A Phosphoserine modification is found at Ser300. Positions 351-379 (NFTADHPFLFFIRHNSSGSILFLGRFSSP) are CARD-binding motif (CBM).

Belongs to the serpin family. Ov-serpin subfamily. As to quaternary structure, monomer. Interacts (via C-terminus) with CASP1; CASP4 (via CARD domain) and CASP5; these interactions regulate the activity of inflammatory caspases. Interacts with PRTN3. Interacts with GZMH. In human bone marrow, present in all CD45+ populations. Expression levels are highest in the neutrophil lineage, intermediate in monocytic, and lowest in lymphocytic lineage. Within the neutrophil lineage, expression is highest in promyelocytes.

It localises to the secreted. The protein localises to the cytoplasm. It is found in the cytolytic granule. Its subcellular location is the early endosome. In terms of biological role, neutrophil serine protease inhibitor that plays an essential role in the regulation of the innate immune response, inflammation and cellular homeostasis. Acts primarily to protect the cell from proteases released in the cytoplasm during stress or infection. These proteases are important in killing microbes but when released from granules, these potent enzymes also destroy host proteins and contribute to mortality. Regulates the activity of the neutrophil proteases elastase, cathepsin G, proteinase-3, chymase, chymotrypsin, and kallikrein-3. Also acts as a potent intracellular inhibitor of GZMH by directly blocking its proteolytic activity. During inflammation, limits the activity of inflammatory caspases CASP1, CASP4 and CASP5 by suppressing their caspase-recruitment domain (CARD) oligomerization and enzymatic activation. When secreted, promotes the proliferation of beta-cells via its protease inhibitory function. The chain is Leukocyte elastase inhibitor (SERPINB1) from Homo sapiens (Human).